The primary structure comprises 890 residues: Translation initiation factor IF-2 (890 aa).

Residues 45–304 (LIDHLNQKNS…LQQGFQKPAQ (260 aa)) are disordered. The span at 67–81 (STLNIPGTGGKSKSV) shows a compositional bias: polar residues. Residues 92–217 (VKRDPQEAER…RMAEENKWTD (126 aa)) show a composition bias toward basic and acidic residues. A compositionally biased stretch (basic residues) spans 252–266 (GRGRNAKAARPKKGN). Residues 267-280 (KHAESKADREEARA) are compositionally biased toward basic and acidic residues. Residues 389-558 (PRAPVVTIMG…LLQAEVLELK (170 aa)) enclose the tr-type G domain. The G1 stretch occupies residues 398–405 (GHVDHGKT). 398-405 (GHVDHGKT) is a binding site for GTP. The segment at 423–427 (GITQH) is G2. The G3 stretch occupies residues 444 to 447 (DTPG). Residues 444–448 (DTPGH) and 498–501 (NKID) contribute to the GTP site. A G4 region spans residues 498–501 (NKID). Positions 534–536 (SAK) are G5. N6-acetyllysine is present on K808.

Belongs to the TRAFAC class translation factor GTPase superfamily. Classic translation factor GTPase family. IF-2 subfamily.

It localises to the cytoplasm. Functionally, one of the essential components for the initiation of protein synthesis. Protects formylmethionyl-tRNA from spontaneous hydrolysis and promotes its binding to the 30S ribosomal subunits. Also involved in the hydrolysis of GTP during the formation of the 70S ribosomal complex. This chain is Translation initiation factor IF-2, found in Escherichia coli (strain SMS-3-5 / SECEC).